A 249-amino-acid chain; its full sequence is 1-(5-phosphoribosyl)-5-[(5-phosphoribosylamino)methylideneamino] imidazole-4-carboxamide isomerase (249 aa).

The Proton acceptor role is filled by aspartate 8. The active-site Proton donor is aspartate 130.

It belongs to the HisA/HisF family.

It localises to the cytoplasm. The catalysed reaction is 1-(5-phospho-beta-D-ribosyl)-5-[(5-phospho-beta-D-ribosylamino)methylideneamino]imidazole-4-carboxamide = 5-[(5-phospho-1-deoxy-D-ribulos-1-ylimino)methylamino]-1-(5-phospho-beta-D-ribosyl)imidazole-4-carboxamide. It functions in the pathway amino-acid biosynthesis; L-histidine biosynthesis; L-histidine from 5-phospho-alpha-D-ribose 1-diphosphate: step 4/9. The sequence is that of 1-(5-phosphoribosyl)-5-[(5-phosphoribosylamino)methylideneamino] imidazole-4-carboxamide isomerase from Chromohalobacter salexigens (strain ATCC BAA-138 / DSM 3043 / CIP 106854 / NCIMB 13768 / 1H11).